The sequence spans 98 residues: MLANSREELVEVFDALDADLDRLDEVSFEVLSTPERLRSLERLECLARRLPAAQHTLINQLDTQASEEELGGTLCCALANRLRITKPEAGRRSAEAKP.

It belongs to the Rv1128c/1148c/1588c/1702c/1945/3466 family.

This is an uncharacterized protein from Mycobacterium tuberculosis (strain ATCC 25618 / H37Rv).